The primary structure comprises 572 residues: Proline--tRNA ligase (572 aa).

This sequence belongs to the class-II aminoacyl-tRNA synthetase family. ProS type 1 subfamily. Homodimer. May form a tertiary complex with YbaK and t-RNA(Pro).

It localises to the cytoplasm. The enzyme catalyses tRNA(Pro) + L-proline + ATP = L-prolyl-tRNA(Pro) + AMP + diphosphate. Catalyzes the attachment of proline to tRNA(Pro) in a two-step reaction: proline is first activated by ATP to form Pro-AMP and then transferred to the acceptor end of tRNA(Pro). As ProRS can inadvertently accommodate and process non-cognate amino acids such as alanine and cysteine, to avoid such errors it has two additional distinct editing activities against alanine. One activity is designated as 'pretransfer' editing and involves the tRNA(Pro)-independent hydrolysis of activated Ala-AMP. The other activity is designated 'posttransfer' editing and involves deacylation of mischarged Ala-tRNA(Pro). The misacylated Cys-tRNA(Pro) is not edited by ProRS, but is probably edited in trans by YbaK. The chain is Proline--tRNA ligase from Haemophilus influenzae (strain ATCC 51907 / DSM 11121 / KW20 / Rd).